Here is a 554-residue protein sequence, read N- to C-terminus: Hydroxylamine reductase (554 aa).

Positions 3, 6, 18, and 25 each coordinate [2Fe-2S] cluster. 8 residues coordinate hybrid [4Fe-2O-2S] cluster: His252, Glu276, Cys320, Cys408, Cys436, Cys461, Glu495, and Lys497. Cys408 is subject to Cysteine persulfide.

The protein belongs to the HCP family. Requires [2Fe-2S] cluster as cofactor. It depends on hybrid [4Fe-2O-2S] cluster as a cofactor.

The protein resides in the cytoplasm. It catalyses the reaction A + NH4(+) + H2O = hydroxylamine + AH2 + H(+). Catalyzes the reduction of hydroxylamine to form NH(3) and H(2)O. In Shewanella pealeana (strain ATCC 700345 / ANG-SQ1), this protein is Hydroxylamine reductase.